We begin with the raw amino-acid sequence, 169 residues long: Protein-export protein SecB (169 aa).

This sequence belongs to the SecB family. In terms of assembly, homotetramer, a dimer of dimers. One homotetramer interacts with 1 SecA dimer.

The protein resides in the cytoplasm. Its function is as follows. One of the proteins required for the normal export of preproteins out of the cell cytoplasm. It is a molecular chaperone that binds to a subset of precursor proteins, maintaining them in a translocation-competent state. It also specifically binds to its receptor SecA. The protein is Protein-export protein SecB of Alteromonas mediterranea (strain DSM 17117 / CIP 110805 / LMG 28347 / Deep ecotype).